The following is a 644-amino-acid chain: Exoribonuclease 2 (644 aa).

The region spanning 189–516 (RQDLTALNFV…NHRLLKAVIK (328 aa)) is the RNB domain. The S1 motif domain maps to 561 to 643 (NTRFAAEIID…ETRSIIARPA (83 aa)).

Belongs to the RNR ribonuclease family. RNase II subfamily.

Its subcellular location is the cytoplasm. The catalysed reaction is Exonucleolytic cleavage in the 3'- to 5'-direction to yield nucleoside 5'-phosphates.. Its function is as follows. Involved in mRNA degradation. Hydrolyzes single-stranded polyribonucleotides processively in the 3' to 5' direction. The polypeptide is Exoribonuclease 2 (Salmonella typhi).